Consider the following 704-residue polypeptide: MSGAALGIEIVVVFFLALFLLHRYGDFKKQQRMVLFGTLLAWYLCFLIVFILPLDVSTTIYNQCLIDQEAQTQTPSVSPVLSEQTTANASISPAKSTQRVCYKPWSYIPDGIMPVFWRVVYWTSQCLTWLLLPFMQSYARSGGFTITGKIKTALIENAIYYGTYLFIFGSLLIYVAVHPQWHLSWYELQTIGITAANTWGLFLLVLLLGYGLVDIPRSYWEASRQGHLLIKTYFKAAKLMTEKADSEENLEDVMEEVRKINESIKYNHPLRKNVDTILRKCPLEYQEKMGRNMDDFEDFDDKQNSYPTERSLSKLHKQVIYAVQRHNRTRVQWQILLEQAFHLEDVAKNETSTSRQFVHSFAPPEPVGWFRRYIYTPTAEWYWECLLKQWFYRVLAVVLALFSVAVVWSECTFFSTHPVLSLFAVFIQLAERDYNYLYIEMACFITIFFLCTCVYSTVFRIRVFNYYYLASHHQTDAYSLQFSGMLFCRLTPPLCLNFLGLIHMDSAISHQAKKQTAYTSIMGSMRVLSFIANGFYIYYPMLIVVLCIATYFSLGTRCLNLLGFQQFMGENEMTSDLIDEGRELLRRERRKRQRIEDGENRRREWRERYAQRDENAARNRTSMSEMKETNYGETLNANTNRQAKYTRSGSQSGRDSIELLQDAEPLDFNAETLTDDPLQSDTGRHAGGRYLSMSSSRNRIFDDV.

Residues 1 to 3 lie on the Extracellular side of the membrane; that stretch reads MSG. The chain crosses the membrane as a helical span at residues 4-21; sequence AALGIEIVVVFFLALFLL. At 22–33 the chain is on the cytoplasmic side; the sequence is HRYGDFKKQQRM. The chain crosses the membrane as a helical span at residues 34 to 54; the sequence is VLFGTLLAWYLCFLIVFILPL. At 55–111 the chain is on the extracellular side; it reads DVSTTIYNQCLIDQEAQTQTPSVSPVLSEQTTANASISPAKSTQRVCYKPWSYIPDG. The N-linked (GlcNAc...) asparagine glycan is linked to N88. A helical membrane pass occupies residues 112 to 132; sequence IMPVFWRVVYWTSQCLTWLLL. Topologically, residues 133–157 are cytoplasmic; the sequence is PFMQSYARSGGFTITGKIKTALIEN. The helical transmembrane segment at 158–178 threads the bilayer; the sequence is AIYYGTYLFIFGSLLIYVAVH. Topologically, residues 179 to 192 are extracellular; the sequence is PQWHLSWYELQTIG. Residues 193–213 traverse the membrane as a helical segment; that stretch reads ITAANTWGLFLLVLLLGYGLV. Over 214 to 393 the chain is Cytoplasmic; sequence DIPRSYWEAS…ECLLKQWFYR (180 aa). Residues 235–266 adopt a coiled-coil conformation; that stretch reads KAAKLMTEKADSEENLEDVMEEVRKINESIKY. A helical membrane pass occupies residues 394 to 414; it reads VLAVVLALFSVAVVWSECTFF. Residues 415–438 are Extracellular-facing; the sequence is STHPVLSLFAVFIQLAERDYNYLY. A helical membrane pass occupies residues 439–459; it reads IEMACFITIFFLCTCVYSTVF. Residues 460-481 are Cytoplasmic-facing; it reads RIRVFNYYYLASHHQTDAYSLQ. Residues 482 to 502 form a helical membrane-spanning segment; sequence FSGMLFCRLTPPLCLNFLGLI. The Extracellular portion of the chain corresponds to 503–527; that stretch reads HMDSAISHQAKKQTAYTSIMGSMRV. The chain crosses the membrane as a helical span at residues 528 to 548; that stretch reads LSFIANGFYIYYPMLIVVLCI. Over 549 to 704 the chain is Cytoplasmic; the sequence is ATYFSLGTRC…SSRNRIFDDV (156 aa). Residues 576-612 adopt a coiled-coil conformation; it reads DLIDEGRELLRRERRKRQRIEDGENRRREWRERYAQR. Disordered regions lie at residues 613 to 654 and 672 to 704; these read DENA…QSGR and TLTD…FDDV. Polar residues predominate over residues 631–654; that stretch reads YGETLNANTNRQAKYTRSGSQSGR.

It belongs to the LIMR family.

The protein localises to the cell membrane. Functionally, may associate with G-protein coupled receptors and regulate downstream signaling pathways. In Danio rerio (Zebrafish), this protein is G-protein coupled receptor-associated protein LMBRD2B (lmbrd2b).